Here is a 335-residue protein sequence, read N- to C-terminus: Beta-ketoacyl-[acyl-carrier-protein] synthase III (335 aa).

Residues cysteine 120 and histidine 261 contribute to the active site. Residues 262-266 form an ACP-binding region; that stretch reads QANER. Asparagine 291 is a catalytic residue.

Belongs to the thiolase-like superfamily. FabH family. In terms of assembly, homodimer.

Its subcellular location is the cytoplasm. The enzyme catalyses malonyl-[ACP] + acetyl-CoA + H(+) = 3-oxobutanoyl-[ACP] + CO2 + CoA. It functions in the pathway lipid metabolism; fatty acid biosynthesis. In terms of biological role, catalyzes the condensation reaction of fatty acid synthesis by the addition to an acyl acceptor of two carbons from malonyl-ACP. Catalyzes the first condensation reaction which initiates fatty acid synthesis and may therefore play a role in governing the total rate of fatty acid production. Possesses both acetoacetyl-ACP synthase and acetyl transacylase activities. Its substrate specificity determines the biosynthesis of branched-chain and/or straight-chain of fatty acids. This is Beta-ketoacyl-[acyl-carrier-protein] synthase III from Chlamydia pneumoniae (Chlamydophila pneumoniae).